We begin with the raw amino-acid sequence, 339 residues long: Alcohol dehydrogenase (339 aa).

Residues Cys-38, His-61, Cys-92, Cys-95, Cys-98, Cys-106, and Cys-148 each contribute to the Zn(2+) site. Residues 172–177, Asp-195, Lys-200, 260–262, and Arg-331 contribute to the NAD(+) site; these read GIGGLG and VGL.

The protein belongs to the zinc-containing alcohol dehydrogenase family. Zn(2+) serves as cofactor.

It catalyses the reaction a primary alcohol + NAD(+) = an aldehyde + NADH + H(+). It carries out the reaction a secondary alcohol + NAD(+) = a ketone + NADH + H(+). The rate-limiting step is NADH release. Catabolite repression. Active with primary alcohols, including methanol. The sequence is that of Alcohol dehydrogenase (adh) from Geobacillus stearothermophilus (Bacillus stearothermophilus).